The chain runs to 582 residues: MSQPIPPEDVWPTYKRLLSYVRPYWFMLVISVIGYALYAGAQAGAAQLAGYLGDTIVNPTDARVLIVSIAPLVLVLFQGLGQFMGSYSMNWVAQQIVYVLRNDVFEHVLKLPQSEYHRNASGRIMSKIIFDAQQVTSAGTDAIIVIIREGLTVIGLFSFLLWQNWKLTLILVTVVPLIALVMNITSKRFRKISRRIQSSMANITHFLGEAIEGSGEVKIFGGQAQEADRFHNVSRSFAKQNVKLNASKIASTVIVQLFVAVGIGFITYLYIHLMGEDLTVGGFLSYITAAGMIQKPLKQLTDVNVKVQRGVTGAASLFELLDTEQETDTGTYTVATKVDGNIDFEGVSFGYDPASPVVRQLNFAIKAGETVALVGRSGAGKSTISAMLPRFFDPDQGRILLDGIPLQEYQLSELRNQIAMVSQRVVLFNDSVRNNIAYGELRSSDDASIIKAAKDAHAWSFIEQLEHGLDTLLGQDGVQLSGGQRQRIAIARALLKDAPVLILDEATSALDSESEHHIQQALEQVMQGRTTLVIAHRLSTIEKADRIMVLDQGQLIEQGSHQQLLEKNGLYTQMYRMNFSEE.

The next 5 helical transmembrane spans lie at 25 to 45, 64 to 84, 142 to 162, 165 to 185, and 253 to 273; these read WFML…QAGA, VLIV…GQFM, AIIV…FLLW, WKLT…MNIT, and VIVQ…YIHL. Positions 29–309 constitute an ABC transmembrane type-1 domain; it reads VISVIGYALY…LTDVNVKVQR (281 aa). The ABC transporter domain maps to 342–577; it reads IDFEGVSFGY…NGLYTQMYRM (236 aa). 375–382 contributes to the ATP binding site; sequence GRSGAGKS.

Belongs to the ABC transporter superfamily. Lipid exporter (TC 3.A.1.106) family. Homodimer.

It localises to the cell inner membrane. It catalyses the reaction ATP + H2O + lipid A-core oligosaccharideSide 1 = ADP + phosphate + lipid A-core oligosaccharideSide 2.. In terms of biological role, involved in lipopolysaccharide (LPS) biosynthesis. Translocates lipid A-core from the inner to the outer leaflet of the inner membrane. Transmembrane domains (TMD) form a pore in the inner membrane and the ATP-binding domain (NBD) is responsible for energy generation. The protein is ATP-dependent lipid A-core flippase of Alcanivorax borkumensis (strain ATCC 700651 / DSM 11573 / NCIMB 13689 / SK2).